The following is a 199-amino-acid chain: Nucleoside triphosphate pyrophosphatase (199 aa).

Residue Asp-76 is the Proton acceptor of the active site.

The protein belongs to the Maf family. A divalent metal cation is required as a cofactor.

It is found in the cytoplasm. It catalyses the reaction a ribonucleoside 5'-triphosphate + H2O = a ribonucleoside 5'-phosphate + diphosphate + H(+). It carries out the reaction a 2'-deoxyribonucleoside 5'-triphosphate + H2O = a 2'-deoxyribonucleoside 5'-phosphate + diphosphate + H(+). Its function is as follows. Nucleoside triphosphate pyrophosphatase. May have a dual role in cell division arrest and in preventing the incorporation of modified nucleotides into cellular nucleic acids. This chain is Nucleoside triphosphate pyrophosphatase, found in Roseobacter denitrificans (strain ATCC 33942 / OCh 114) (Erythrobacter sp. (strain OCh 114)).